A 473-amino-acid chain; its full sequence is Sun domain-containing protein 1 (473 aa).

Residues 1–47 are disordered; sequence MALRHTISPQFSNRHSPPVTRSVSRTGVHQPLDTSTPVTRRDSQPGT. Residues 7-47 show a composition bias toward polar residues; it reads ISPQFSNRHSPPVTRSVSRTGVHQPLDTSTPVTRRDSQPGT. Coiled coils occupy residues 163-191 and 204-235; these read ISNL…LENV and EELK…STKI. Residues 237 to 257 are disordered; sequence HSTPEKAPETAPTASLPPSSQ. Over residues 248 to 257 the composition is skewed to polar residues; the sequence is PTASLPPSSQ. Residues 262–282 form a helical membrane-spanning segment; the sequence is HITRRALLGVNVANSLIGASI. In terms of domain architecture, SUN spans 279-443; the sequence is GASIDHSCSS…YLIRVYGEPV (165 aa). The interval 443–473 is disordered; sequence VDPPKETQPMTDNGTESKLESAIVNSVSETA.

The protein localises to the nucleus membrane. It localises to the nucleus envelope. In terms of biological role, involved in centrosome attachment to the nucleus. Required for zyg-12 localization to the nuclear envelope. Together with pot-1, it is required to anchor telomeres to the nuclear envelope in embryos. In Caenorhabditis elegans, this protein is Sun domain-containing protein 1.